The sequence spans 350 residues: Holliday junction branch migration complex subunit RuvB (350 aa).

Residues 4–184 are large ATPase domain (RuvB-L); the sequence is ADRIVTASSR…FGIVQRLEFY (181 aa). ATP is bound by residues Ile-23, Arg-24, Gly-65, Lys-68, Thr-69, Thr-70, 131 to 133, Arg-174, Tyr-184, and Arg-221; that span reads EDF. Thr-69 lines the Mg(2+) pocket. The tract at residues 185–255 is small ATPAse domain (RuvB-S); sequence STEDLATIVR…IADLALNMLD (71 aa). Residues 258 to 350 are head domain (RuvB-H); sequence ERGFDHQDRR…TPDLFEGDIV (93 aa). Arg-294, Arg-313, and Arg-318 together coordinate DNA.

The protein belongs to the RuvB family. Homohexamer. Forms an RuvA(8)-RuvB(12)-Holliday junction (HJ) complex. HJ DNA is sandwiched between 2 RuvA tetramers; dsDNA enters through RuvA and exits via RuvB. An RuvB hexamer assembles on each DNA strand where it exits the tetramer. Each RuvB hexamer is contacted by two RuvA subunits (via domain III) on 2 adjacent RuvB subunits; this complex drives branch migration. In the full resolvosome a probable DNA-RuvA(4)-RuvB(12)-RuvC(2) complex forms which resolves the HJ.

The protein localises to the cytoplasm. The catalysed reaction is ATP + H2O = ADP + phosphate + H(+). In terms of biological role, the RuvA-RuvB-RuvC complex processes Holliday junction (HJ) DNA during genetic recombination and DNA repair, while the RuvA-RuvB complex plays an important role in the rescue of blocked DNA replication forks via replication fork reversal (RFR). RuvA specifically binds to HJ cruciform DNA, conferring on it an open structure. The RuvB hexamer acts as an ATP-dependent pump, pulling dsDNA into and through the RuvAB complex. RuvB forms 2 homohexamers on either side of HJ DNA bound by 1 or 2 RuvA tetramers; 4 subunits per hexamer contact DNA at a time. Coordinated motions by a converter formed by DNA-disengaged RuvB subunits stimulates ATP hydrolysis and nucleotide exchange. Immobilization of the converter enables RuvB to convert the ATP-contained energy into a lever motion, pulling 2 nucleotides of DNA out of the RuvA tetramer per ATP hydrolyzed, thus driving DNA branch migration. The RuvB motors rotate together with the DNA substrate, which together with the progressing nucleotide cycle form the mechanistic basis for DNA recombination by continuous HJ branch migration. Branch migration allows RuvC to scan DNA until it finds its consensus sequence, where it cleaves and resolves cruciform DNA. This chain is Holliday junction branch migration complex subunit RuvB, found in Stutzerimonas stutzeri (strain A1501) (Pseudomonas stutzeri).